A 489-amino-acid chain; its full sequence is Zinc finger protein 772 (489 aa).

One can recognise a KRAB domain in the interval 27–98 (VNFEDVFVYF…DWVDMTLAVA (72 aa)). 10 C2H2-type zinc fingers span residues 144–166 (YPCG…QETH), 172–194 (YMCV…QKQH), 266–288 (YKCS…QRVH), 294–316 (YECG…QRIH), 322–344 (YECG…QRVH), 350–372 (YKCS…ESIH), 378–400 (YECS…WSVH), 406–428 (YECI…QRVH), 434–456 (YVCS…HRIH), and 462–484 (YKCS…WKIH).

Belongs to the krueppel C2H2-type zinc-finger protein family.

It localises to the nucleus. May be involved in transcriptional regulation. This chain is Zinc finger protein 772 (ZNF772), found in Homo sapiens (Human).